We begin with the raw amino-acid sequence, 338 residues long: Glyceraldehyde-3-phosphate dehydrogenase (338 aa).

Residues 12–13, D34, and R79 contribute to the NAD(+) site; that span reads RI. D-glyceraldehyde 3-phosphate-binding positions include 150-152, T181, 210-211, and R233; these read SCT and TG. The active-site Nucleophile is C151. N316 contributes to the NAD(+) binding site.

It belongs to the glyceraldehyde-3-phosphate dehydrogenase family. In terms of assembly, homotetramer.

The protein localises to the cytoplasm. The enzyme catalyses D-glyceraldehyde 3-phosphate + phosphate + NAD(+) = (2R)-3-phospho-glyceroyl phosphate + NADH + H(+). It functions in the pathway carbohydrate degradation; glycolysis; pyruvate from D-glyceraldehyde 3-phosphate: step 1/5. The sequence is that of Glyceraldehyde-3-phosphate dehydrogenase (GPD) from Yarrowia lipolytica (strain CLIB 122 / E 150) (Yeast).